Reading from the N-terminus, the 72-residue chain is KRAIQSEKRRQHNASRRSMTRTYLKKVIAAIASGDKAAAVAAFATAQPIMDRMATKGLIHKNKAARHKSRLS.

This sequence belongs to the bacterial ribosomal protein bS20 family.

In terms of biological role, binds directly to 16S ribosomal RNA. The chain is Small ribosomal subunit protein bS20 (rpsT) from Aeromonas salmonicida.